Reading from the N-terminus, the 214-residue chain is Adenylate kinase (214 aa).

10-15 (GAGKGT) is a binding site for ATP. Positions 30–59 (STGDMFRDHKARGTEIGKQVQAIMDAGGLV) are NMP. Residues threonine 31, arginine 36, 57–59 (GLV), 85–88 (GYPR), and glutamine 92 contribute to the AMP site. The interval 126-163 (GRRSCPRCGAVYHVSQNPPHRAGFCDRDDAALVQREDD) is LID. Arginine 127 is an ATP binding site. Positions 130 and 133 each coordinate Zn(2+). 136-137 (VY) provides a ligand contact to ATP. Residues cysteine 150 and aspartate 153 each coordinate Zn(2+). AMP is bound by residues arginine 160 and arginine 171. Glycine 199 is a binding site for ATP.

The protein belongs to the adenylate kinase family. In terms of assembly, monomer.

Its subcellular location is the cytoplasm. The catalysed reaction is AMP + ATP = 2 ADP. Its pathway is purine metabolism; AMP biosynthesis via salvage pathway; AMP from ADP: step 1/1. Catalyzes the reversible transfer of the terminal phosphate group between ATP and AMP. Plays an important role in cellular energy homeostasis and in adenine nucleotide metabolism. The protein is Adenylate kinase of Anaeromyxobacter dehalogenans (strain 2CP-1 / ATCC BAA-258).